Consider the following 87-residue polypeptide: Cell division topological specificity factor (87 aa).

The protein belongs to the MinE family.

Functionally, prevents the cell division inhibition by proteins MinC and MinD at internal division sites while permitting inhibition at polar sites. This ensures cell division at the proper site by restricting the formation of a division septum at the midpoint of the long axis of the cell. The sequence is that of Cell division topological specificity factor from Clostridium botulinum (strain ATCC 19397 / Type A).